Reading from the N-terminus, the 259-residue chain is Flagellar L-ring protein 1 (259 aa).

An N-terminal signal peptide occupies residues 1 to 15 (MKRICLLALITTMSG). Cys-16 carries N-palmitoyl cysteine lipidation. Cys-16 carries the S-diacylglycerol cysteine lipid modification. A disordered region spans residues 38-63 (EGDKSKDESSGIVDTLRGRNDPVAGD).

This sequence belongs to the FlgH family. In terms of assembly, the basal body constitutes a major portion of the flagellar organelle and consists of four rings (L,P,S, and M) mounted on a central rod.

The protein resides in the cell outer membrane. Its subcellular location is the bacterial flagellum basal body. In terms of biological role, assembles around the rod to form the L-ring and probably protects the motor/basal body from shearing forces during rotation. This Vibrio parahaemolyticus serotype O3:K6 (strain RIMD 2210633) protein is Flagellar L-ring protein 1 (flgH1).